The sequence spans 481 residues: Adenosylhomocysteinase (481 aa).

Threonine 65, aspartate 140, and glutamate 200 together coordinate substrate. 201-203 lines the NAD(+) pocket; it reads TTT. 2 residues coordinate substrate: lysine 230 and aspartate 234. NAD(+) contacts are provided by residues asparagine 235, 264-269, glutamate 287, asparagine 322, 343-345, and asparagine 393; these read GYGDVG and IGH.

Belongs to the adenosylhomocysteinase family. The cofactor is NAD(+).

The protein localises to the cytoplasm. The enzyme catalyses S-adenosyl-L-homocysteine + H2O = L-homocysteine + adenosine. The protein operates within amino-acid biosynthesis; L-homocysteine biosynthesis; L-homocysteine from S-adenosyl-L-homocysteine: step 1/1. May play a key role in the regulation of the intracellular concentration of adenosylhomocysteine. The protein is Adenosylhomocysteinase of Polynucleobacter necessarius subsp. necessarius (strain STIR1).